The chain runs to 79 residues: Large ribosomal subunit protein eL38 (79 aa).

Belongs to the eukaryotic ribosomal protein eL38 family.

This chain is Large ribosomal subunit protein eL38 (RPL38), found in Theileria parva (East coast fever infection agent).